The chain runs to 516 residues: DNA-(apurinic or apyrimidinic site) endonuclease 2 (516 aa).

Mg(2+) is bound by residues Asn-8 and Glu-47. Tyr-155 is a catalytic residue. Mg(2+) contacts are provided by Asp-196, Asn-198, Asp-302, and His-303. Asp-196 (proton donor/acceptor) is an active-site residue. The active-site Proton acceptor is the His-303. Over residues 357–366 (QPSHQIQAQR) the composition is skewed to polar residues. Residues 357 to 389 (QPSHQIQAQRQPRKACMHSTRLRKSQGGPKRKQ) are disordered. Residues 367-389 (QPRKACMHSTRLRKSQGGPKRKQ) are compositionally biased toward basic residues. Lys-370 is covalently cross-linked (Glycyl lysine isopeptide (Lys-Gly) (interchain with G-Cter in ubiquitin)). Residues 389-396 (QKNLMSYF) form a required for the interaction and colocalization with PCNA in nuclear foci in presence of oxidative-induced DNA damaging agents region. Zn(2+) is bound by residues Cys-467, His-470, Cys-493, and Cys-507. The GRF-type zinc-finger motif lies at 467-516 (CGGHREPCVMRTVKKTGPNFGRQFYMCARPRGPPSDPSSRCNFFLWSRPS).

The protein belongs to the DNA repair enzymes AP/ExoA family. As to quaternary structure, interacts with PCNA. This interaction is increased by misincorporation of uracil in nuclear DNA. It depends on Mg(2+) as a cofactor. Mn(2+) serves as cofactor. Post-translationally, ubiquitinated by the CUL9-RBX1 complex. Ubiquitinated by MKRN3 at Lys-370 leading to proteasomal degradation. Expressed in lymphocytes, thymocytes and splenocytes (at protein level). Highly expressed in the thymus and weakly expressed in the bone marrow, spleen, eye, kidney, lung, brain and uterus.

Its subcellular location is the nucleus. The protein resides in the cytoplasm. The protein localises to the mitochondrion. The enzyme catalyses Exonucleolytic cleavage in the 3'- to 5'-direction to yield nucleoside 5'-phosphates.. 3'-5' exonuclease activity is activated by sodium and manganese. 3'-5' exonuclease and 3'-phosphodiesterase activities are stimulated in presence of PCNA. Its function is as follows. Functions as a weak apurinic/apyrimidinic (AP) endodeoxyribonuclease in the DNA base excision repair (BER) pathway of DNA lesions induced by oxidative and alkylating agents. Initiates repair of AP sites in DNA by catalyzing hydrolytic incision of the phosphodiester backbone immediately adjacent to the damage, generating a single-strand break with 5'-deoxyribose phosphate and 3'-hydroxyl ends. Also displays double-stranded DNA 3'-5' exonuclease, 3'-phosphodiesterase activities. Shows robust 3'-5' exonuclease activity on 3'-recessed heteroduplex DNA and is able to remove mismatched nucleotides preferentially. Shows fairly strong 3'-phosphodiesterase activity involved in the removal of 3'-damaged termini formed in DNA by oxidative agents. In the nucleus functions in the PCNA-dependent BER pathway. Plays a role in reversing blocked 3' DNA ends, problematic lesions that preclude DNA synthesis. Required for somatic hypermutation (SHM) and DNA cleavage step of class switch recombination (CSR) of immunoglobulin genes. Required for proper cell cycle progression during proliferation of peripheral lymphocytes. This chain is DNA-(apurinic or apyrimidinic site) endonuclease 2 (Apex2), found in Mus musculus (Mouse).